A 490-amino-acid chain; its full sequence is Cytochrome P450 2C13, male-specific (490 aa).

Residue Cys435 coordinates heme.

This sequence belongs to the cytochrome P450 family. It depends on heme as a cofactor. As to expression, liver, and to a lesser extent in prostate, kidney, heart and brain.

The protein localises to the endoplasmic reticulum membrane. The protein resides in the microsome membrane. It catalyses the reaction an organic molecule + reduced [NADPH--hemoprotein reductase] + O2 = an alcohol + oxidized [NADPH--hemoprotein reductase] + H2O + H(+). Functionally, cytochromes P450 are a group of heme-thiolate monooxygenases. In liver microsomes, this enzyme is involved in an NADPH-dependent electron transport pathway. It oxidizes a variety of structurally unrelated compounds, including steroids, fatty acids, and xenobiotics. The chain is Cytochrome P450 2C13, male-specific (Cyp2c13) from Rattus norvegicus (Rat).